The chain runs to 965 residues: UvrABC system protein A (965 aa).

32-39 serves as a coordination point for ATP; it reads GLSGSGKS. The C4-type zinc finger occupies 254-281; that stretch reads CPVCDYSLPELEPRLFSFNAPMGACPAC. 2 consecutive ABC transporter domains span residues 311–588 and 608–937; these read WDRR…PRSL and PNAT…HFLA. ATP is bound at residue 641–648; that stretch reads GVSGSGKS. The segment at 740 to 766 adopts a C4-type zinc-finger fold; that stretch reads CEACEGDGLIKVEMHFLPDVYVPCDIC.

This sequence belongs to the ABC transporter superfamily. UvrA family. Forms a heterotetramer with UvrB during the search for lesions.

The protein resides in the cytoplasm. Its function is as follows. The UvrABC repair system catalyzes the recognition and processing of DNA lesions. UvrA is an ATPase and a DNA-binding protein. A damage recognition complex composed of 2 UvrA and 2 UvrB subunits scans DNA for abnormalities. When the presence of a lesion has been verified by UvrB, the UvrA molecules dissociate. This is UvrABC system protein A from Xylella fastidiosa (strain Temecula1 / ATCC 700964).